A 293-amino-acid polypeptide reads, in one-letter code: 4-hydroxy-tetrahydrodipicolinate synthase (293 aa).

Position 46 (Thr46) interacts with pyruvate. Tyr133 acts as the Proton donor/acceptor in catalysis. The active-site Schiff-base intermediate with substrate is the Lys161. Pyruvate is bound at residue Val202.

It belongs to the DapA family. Homotetramer; dimer of dimers.

The protein localises to the cytoplasm. It carries out the reaction L-aspartate 4-semialdehyde + pyruvate = (2S,4S)-4-hydroxy-2,3,4,5-tetrahydrodipicolinate + H2O + H(+). It functions in the pathway amino-acid biosynthesis; L-lysine biosynthesis via DAP pathway; (S)-tetrahydrodipicolinate from L-aspartate: step 3/4. Functionally, catalyzes the condensation of (S)-aspartate-beta-semialdehyde [(S)-ASA] and pyruvate to 4-hydroxy-tetrahydrodipicolinate (HTPA). This Wolbachia pipientis wMel protein is 4-hydroxy-tetrahydrodipicolinate synthase.